The sequence spans 306 residues: MEKLVIGSRGSELALWQANHIKERLKKECSMESEIRIVKTTGDKILDAPLNKIGGKGLFTKELEELLLKGAIDLAVHSLKDVPVVFEKGLDLACITKRADVRDTFLSVKFPDLMSLPKGAKVGTTSLRRSMQIKFKRKDLDTESLRGNVQTRLKKLECGEFDAIILAEAGLCRLNVQGAKYRKAFSVKEMIPSMGQGALGVEMLKNHKHFITLQKLNNEESAFCCHLEREFIKGLNGGCQIPIGVHANLMGDEVKIRAVLGLPNGKEVIAKEKQGDKTKAFDLVQELLEEFLQSGAKEILEKAQLF.

The residue at position 239 (Cys-239) is an S-(dipyrrolylmethanemethyl)cysteine.

Belongs to the HMBS family. As to quaternary structure, monomer. Dipyrromethane serves as cofactor.

It catalyses the reaction 4 porphobilinogen + H2O = hydroxymethylbilane + 4 NH4(+). Its pathway is porphyrin-containing compound metabolism; protoporphyrin-IX biosynthesis; coproporphyrinogen-III from 5-aminolevulinate: step 2/4. Functionally, tetrapolymerization of the monopyrrole PBG into the hydroxymethylbilane pre-uroporphyrinogen in several discrete steps. The chain is Porphobilinogen deaminase (hemC) from Helicobacter pylori (strain J99 / ATCC 700824) (Campylobacter pylori J99).